Consider the following 217-residue polypeptide: 3-isopropylmalate dehydratase small subunit (217 aa).

The protein belongs to the LeuD family. LeuD type 1 subfamily. Heterodimer of LeuC and LeuD.

The enzyme catalyses (2R,3S)-3-isopropylmalate = (2S)-2-isopropylmalate. It functions in the pathway amino-acid biosynthesis; L-leucine biosynthesis; L-leucine from 3-methyl-2-oxobutanoate: step 2/4. Its function is as follows. Catalyzes the isomerization between 2-isopropylmalate and 3-isopropylmalate, via the formation of 2-isopropylmaleate. The sequence is that of 3-isopropylmalate dehydratase small subunit from Paraburkholderia phymatum (strain DSM 17167 / CIP 108236 / LMG 21445 / STM815) (Burkholderia phymatum).